The primary structure comprises 209 residues: Probable phosphatidylglycerophosphatase, mitochondrial (209 aa).

The Phosphoryl acceptor signature appears at 57–61 (DKDNC).

The protein belongs to the GEP4 family.

Its subcellular location is the mitochondrion inner membrane. It carries out the reaction a 1,2-diacyl-sn-glycero-3-phospho-(1'-sn-glycero-3'-phosphate) + H2O = a 1,2-diacyl-sn-glycero-3-phospho-(1'-sn-glycerol) + phosphate. The protein operates within phospholipid metabolism; phosphatidylglycerol biosynthesis; phosphatidylglycerol from CDP-diacylglycerol: step 2/2. Functionally, phosphatidylglycerophosphatase involved in the biosynthesis of cardiolipin (CL), a unique dimeric phosphoglycerolipid predominantly present in mitochondrial membranes and which has important functions for cellular energy metabolism, mitochondrial dynamics and the initiation of apoptotic pathways. The protein is Probable phosphatidylglycerophosphatase, mitochondrial (gep4) of Schizosaccharomyces pombe (strain 972 / ATCC 24843) (Fission yeast).